The chain runs to 520 residues: TnpB-like protein L79 (520 aa).

The span at 21–47 (GSKTKKKVFVKKKPPDKKPLKKPVKKT) shows a compositional bias: basic residues. Positions 21 to 52 (GSKTKKKVFVKKKPPDKKPLKKPVKKTVKTDK) are disordered. Cys-474, Cys-477, Cys-491, and Cys-494 together coordinate Zn(2+).

In the central section; belongs to the transposase 2 family. The protein in the C-terminal section; belongs to the transposase 35 family.

The protein is TnpB-like protein L79 of Acanthamoeba polyphaga mimivirus (APMV).